Here is a 196-residue protein sequence, read N- to C-terminus: Pyridoxal 5'-phosphate synthase subunit PdxT (196 aa).

G46–S48 serves as a coordination point for L-glutamine. C78 acts as the Nucleophile in catalysis. L-glutamine is bound by residues R105 and I134–R135. Active-site charge relay system residues include H170 and E172.

The protein belongs to the glutaminase PdxT/SNO family. In terms of assembly, in the presence of PdxS, forms a dodecamer of heterodimers. Only shows activity in the heterodimer.

The enzyme catalyses aldehydo-D-ribose 5-phosphate + D-glyceraldehyde 3-phosphate + L-glutamine = pyridoxal 5'-phosphate + L-glutamate + phosphate + 3 H2O + H(+). It carries out the reaction L-glutamine + H2O = L-glutamate + NH4(+). Its pathway is cofactor biosynthesis; pyridoxal 5'-phosphate biosynthesis. Functionally, catalyzes the hydrolysis of glutamine to glutamate and ammonia as part of the biosynthesis of pyridoxal 5'-phosphate. The resulting ammonia molecule is channeled to the active site of PdxS. The polypeptide is Pyridoxal 5'-phosphate synthase subunit PdxT (Pelotomaculum thermopropionicum (strain DSM 13744 / JCM 10971 / SI)).